The primary structure comprises 608 residues: Phosphogluconate dehydratase (608 aa).

Positions 154 and 221 each coordinate [4Fe-4S] cluster.

It belongs to the IlvD/Edd family. Requires [4Fe-4S] cluster as cofactor.

The catalysed reaction is 6-phospho-D-gluconate = 2-dehydro-3-deoxy-6-phospho-D-gluconate + H2O. It functions in the pathway carbohydrate metabolism; Entner-Doudoroff pathway. Catalyzes the dehydration of 6-phospho-D-gluconate to 2-dehydro-3-deoxy-6-phospho-D-gluconate. The chain is Phosphogluconate dehydratase from Helicobacter pylori (strain ATCC 700392 / 26695) (Campylobacter pylori).